The sequence spans 88 residues: Cell division topological specificity factor (88 aa).

The protein belongs to the MinE family.

In terms of biological role, prevents the cell division inhibition by proteins MinC and MinD at internal division sites while permitting inhibition at polar sites. This ensures cell division at the proper site by restricting the formation of a division septum at the midpoint of the long axis of the cell. The protein is Cell division topological specificity factor of Paracidovorax citrulli (strain AAC00-1) (Acidovorax citrulli).